The chain runs to 119 residues: Hemerythrin-like protein (119 aa).

Residues His26, His56, Glu60, His75, His79, His107, and Asp112 each coordinate Fe cation.

It belongs to the hemerythrin family.

Functionally, oxygen-binding protein. The oxygen-binding site contains two iron atoms. The polypeptide is Hemerythrin-like protein (nfa1) (Naegleria fowleri (Brain eating amoeba)).